We begin with the raw amino-acid sequence, 297 residues long: Putative S-adenosyl-L-methionine-dependent methyltransferase Mmcs_1044 (297 aa).

Residues D124 and 153-154 (DL) contribute to the S-adenosyl-L-methionine site.

Belongs to the UPF0677 family.

In terms of biological role, exhibits S-adenosyl-L-methionine-dependent methyltransferase activity. The polypeptide is Putative S-adenosyl-L-methionine-dependent methyltransferase Mmcs_1044 (Mycobacterium sp. (strain MCS)).